The primary structure comprises 169 residues: Peptide deformylase (169 aa).

Residues cysteine 91 and histidine 133 each contribute to the Fe cation site. Residue glutamate 134 is part of the active site. Histidine 137 serves as a coordination point for Fe cation.

This sequence belongs to the polypeptide deformylase family. Requires Fe(2+) as cofactor.

The catalysed reaction is N-terminal N-formyl-L-methionyl-[peptide] + H2O = N-terminal L-methionyl-[peptide] + formate. Removes the formyl group from the N-terminal Met of newly synthesized proteins. Requires at least a dipeptide for an efficient rate of reaction. N-terminal L-methionine is a prerequisite for activity but the enzyme has broad specificity at other positions. The protein is Peptide deformylase of Klebsiella pneumoniae (strain 342).